Reading from the N-terminus, the 81-residue chain is Protein GPR15LG (81 aa).

The first 24 residues, 1–24 (MRFLALTSLLCILLLCLSFFSAEG), serve as a signal peptide directing secretion. Cystine bridges form between Cys-40-Cys-63 and Cys-41-Cys-60.

Interacts with SUSD2; the interaction is direct.

It localises to the secreted. In terms of biological role, highly cationic protein that has multiple functions. Acts as a chemotactic factor that mediates lymphocytes recruitment to epithelia through binding and activation of the G-protein coupled receptor GPR15. May be a tumor suppressor; together with SUSD2 has a growth inhibitory effect on colon cancer cells which includes G1 cell cycle arrest. May regulate keratinocyte proliferation. In addition, through activation of Mas-related G protein-coupled receptors (MRGPRs) contributes to pruritogenesis by activating itch-selective sensory neurons and mast cells degranulation. Functionally, has antimicrobial activity against Gram-positive bacteria, including Staphylococcus aureus and Actinomyces spec., and Mycoplasma hominis and lentivirus. This Sus scrofa (Pig) protein is Protein GPR15LG (GPR15LG).